We begin with the raw amino-acid sequence, 356 residues long: MAVPGKKKLVAQEELRKLMKAKQRESSSKKRIESPLAKYNSLGHLSCVVCNSLIKSELLWPAHILGKQHKEKVAELKGTKATTSSPSNTIEYPRITKRKGSEPEKQESKRTKGSEDHPSASTTKLPEEFFEKEKTSSAGNAPSLKLLAGDYEDVDDDDAEEGEEYENAKEASSSLLKPAEIPLPPPTSSADNLPADFFENKMPLVSHSGSVLKADIQEKIVERKENTAEALPEGFFDDPEVDAKVRKVDAPKDQMDKEWEEFQKEIRQVNTVSEAIVAEEDEEGRLDRQIDEIDEQIQCYRRVEHLRDRKDTLQDAKMEVLKSKSNEKWQDEIGSDDEEKLPSLLYQNWREKGAFH.

Residues alanine 11–glutamate 33 adopt a coiled-coil conformation. Residues cysteine 47–histidine 69 form a C2H2-type zinc finger. Residues glutamate 71 to alanine 195 form a disordered region. The span at lysine 80 to isoleucine 90 shows a compositional bias: polar residues. Composition is skewed to basic and acidic residues over residues lysine 99 to proline 118 and leucine 125 to threonine 135. A compositionally biased stretch (acidic residues) spans aspartate 150–tyrosine 165. Residues alanine 278–lysine 322 adopt a coiled-coil conformation.

The protein resides in the nucleus. It localises to the chromosome. It is found in the nucleus speckle. In terms of biological role, may act as an important regulator of the cell cycle that participates in the maintenance of genome integrity. This Xenopus laevis (African clawed frog) protein is Zinc finger protein 830.